A 154-amino-acid polypeptide reads, in one-letter code: Thioredoxin-like protein CXXS2 (154 aa).

Residues 23–148 form the Thioredoxin domain; that stretch reads RRNKTQARSQ…LQKKTAAAAN (126 aa). Residue Ser-31 is modified to Phosphoserine.

It belongs to the thioredoxin family. In terms of tissue distribution, ubiquitous.

The protein resides in the cytoplasm. Functionally, possesses low disulfide reductase activity, but efficient protein disulfide isomerase activity. Does not possess deglutathionylation activity. The protein is Thioredoxin-like protein CXXS2 (CXXS2) of Arabidopsis thaliana (Mouse-ear cress).